Consider the following 317-residue polypeptide: Universal stress protein Mb2019 (317 aa).

ATP contacts are provided by residues glycine 13, 128–134 (GYRGQGA), 142–143 (SV), glycine 175, aspartate 208, 277–283 (GSHGRGG), and 291–293 (SVS).

The protein belongs to the universal stress protein A family.

The sequence is that of Universal stress protein Mb2019 from Mycobacterium bovis (strain ATCC BAA-935 / AF2122/97).